The sequence spans 274 residues: Halorhodopsin (274 aa).

The propeptide occupies 1–21 (MSITSVPGVVDAGVLGAQSAA). Over 22 to 25 (AVRE) the chain is Extracellular. A helical transmembrane segment spans residues 26–51 (NALLSSSLWVNVALAGIAILVFVYMG). Topologically, residues 52–57 (RTIRPG) are cytoplasmic. Residues 58 to 81 (RPRLIWGATLMIPLVSISSYLGLL) form a helical membrane-spanning segment. Residues 82–105 (SGLTVGMIEMPAGHALAGEMVRSQ) are Extracellular-facing. 3 residues coordinate chloride: glutamine 105, threonine 111, and serine 115. The helical transmembrane segment at 106–127 (WGRYLTWALSTPMILLALGLLA) threads the bilayer. At 128–130 (DVD) the chain is on the cytoplasmic side. Residues 131 to 154 (LGSLFTVIAADIGMCVTGLAAAMT) form a helical membrane-spanning segment. Topologically, residues 155–157 (TSA) are extracellular. Residues 158-180 (LLFRWAFYAISCAFFVVVLSALV) traverse the membrane as a helical segment. Topologically, residues 181-192 (TDWAASASSAGT) are cytoplasmic. A helical transmembrane segment spans residues 193 to 216 (AEIFDTLRVLTVVLWLGYPIVWAV). At 217–226 (GVEGLALVQS) the chain is on the extracellular side. The chain crosses the membrane as a helical span at residues 227–255 (VGVTSWAYSVLDVFAKYVFAFILLRWVAN). Position 242 is an N6-(retinylidene)lysine (lysine 242). The Cytoplasmic portion of the chain corresponds to 256–274 (NERTVAVAGQTLGTMSSDD).

The protein belongs to the archaeal/bacterial/fungal opsin family. In terms of assembly, homotrimer.

Its subcellular location is the cell membrane. Light-driven chloride pump. The protein is Halorhodopsin (hop) of Halobacterium salinarum (strain ATCC 29341 / DSM 671 / R1).